The chain runs to 273 residues: MTRVEYKHTEIAVKKKLGQNFLTDRNITRKIVAASGAGSQDRILEIGPGFGALTREILEVCPAFTVVEKDRALAAFIRQEYPQLQLIEADFLDIDLERLAAGGPLRVLGNIPYSITTPILFKLLENRRSITSATLMMQHEVAARLVATPSTKEYGILAVQLQTFCDVRYLFKVGRKVFRPQPNVDSAVISMVPKKNVAVEDAQAFSRFVRTAFHQRRKTLYNNLKDAYMLQAVDEGTLKLRAEALSIEKLADLFKLVQPLPAGEPPMKRDGRR.

Asn20, Leu22, Gly47, Glu68, Asp90, and Asn110 together coordinate S-adenosyl-L-methionine.

The protein belongs to the class I-like SAM-binding methyltransferase superfamily. rRNA adenine N(6)-methyltransferase family. RsmA subfamily.

It is found in the cytoplasm. The enzyme catalyses adenosine(1518)/adenosine(1519) in 16S rRNA + 4 S-adenosyl-L-methionine = N(6)-dimethyladenosine(1518)/N(6)-dimethyladenosine(1519) in 16S rRNA + 4 S-adenosyl-L-homocysteine + 4 H(+). Functionally, specifically dimethylates two adjacent adenosines (A1518 and A1519) in the loop of a conserved hairpin near the 3'-end of 16S rRNA in the 30S particle. May play a critical role in biogenesis of 30S subunits. This chain is Ribosomal RNA small subunit methyltransferase A, found in Chlorobium luteolum (strain DSM 273 / BCRC 81028 / 2530) (Pelodictyon luteolum).